Reading from the N-terminus, the 336-residue chain is Atypical chemokine receptor 1 (336 aa).

Residues 1–63 (MGNCLHQAEL…CNLLDDSSLP (63 aa)) lie on the Extracellular side of the membrane. N-linked (GlcNAc...) asparagine glycosylation is found at Asn16 and Asn33. 2 disulfides stabilise this stretch: Cys51-Cys276 and Cys129-Cys195. Residues 64–84 (FFILASVLGILASSTVLFMLF) traverse the membrane as a helical segment. Over 85-95 (RPLFRWQLCPG) the chain is Cytoplasmic. A helical membrane pass occupies residues 96-116 (WPVLAQLAVGSALFSIVVPIL). Over 117-129 (APGLGNTRSSALC) the chain is Extracellular. Residues 130–153 (SLGYCVWYGSAFAQALLLGCHASL) traverse the membrane as a helical segment. Over 154–166 (GPKLGAGQVPGLT) the chain is Cytoplasmic. A helical membrane pass occupies residues 167–187 (LGLTVGLWGAAALLTVPITLA). At 188-207 (SGASDGLCTPIYSTELKALQ) the chain is on the extracellular side. The helical transmembrane segment at 208–228 (ATHTVACFAIFVLLPLGLFGA) threads the bilayer. At 229 to 244 (KGVKKALGMGPGPWMT) the chain is on the cytoplasmic side. The helical transmembrane segment at 245-265 (ILWIWFIFWWPHGVVLGLDFL) threads the bilayer. Over 266 to 287 (VRSKLLLLPTCLAQQVLDLLLN) the chain is Extracellular. Residues 288 to 308 (LAEALTIVHCVATPLLLALFC) traverse the membrane as a helical segment. Residues 309-336 (HQATRTLLPSLPLPERWSSPVDTLGSKS) lie on the Cytoplasmic side of the membrane.

Belongs to the G-protein coupled receptor 1 family. Atypical chemokine receptor subfamily.

It localises to the early endosome. It is found in the recycling endosome. Its subcellular location is the membrane. Its function is as follows. Atypical chemokine receptor that controls chemokine levels and localization via high-affinity chemokine binding that is uncoupled from classic ligand-driven signal transduction cascades, resulting instead in chemokine sequestration, degradation, or transcytosis. Also known as interceptor (internalizing receptor) or chemokine-scavenging receptor or chemokine decoy receptor. Has a promiscuous chemokine-binding profile, interacting with inflammatory chemokines of both the CXC and the CC subfamilies but not with homeostatic chemokines. Acts as a receptor for chemokines including CCL2, CCL5, CCL7, CCL11, CCL13, CCL14, CCL17, CXCL5, CXCL6, IL8/CXCL8, CXCL11, GRO, RANTES, MCP-1 and TARC. May regulate chemokine bioavailability and, consequently, leukocyte recruitment through two distinct mechanisms: when expressed in endothelial cells, it sustains the abluminal to luminal transcytosis of tissue-derived chemokines and their subsequent presentation to circulating leukocytes; when expressed in erythrocytes, serves as blood reservoir of cognate chemokines but also as a chemokine sink, buffering potential surges in plasma chemokine levels. The chain is Atypical chemokine receptor 1 (ACKR1) from Sapajus apella (Brown-capped capuchin).